The primary structure comprises 196 residues: Protein LIGHT-DEPENDENT SHORT HYPOCOTYLS 6 (196 aa).

Residues 1–16 (MESADSGRSDPVKGDD) are compositionally biased toward basic and acidic residues. Disordered regions lie at residues 1-36 (MESADSGRSDPVKGDDPGPSFVSSPPATPSRYESQK) and 149-196 (ARGI…AVPP). One can recognise an ALOG domain in the interval 31–158 (RYESQKRRDW…ARGIPYEKKK (128 aa)). The short motif at 156–160 (KKKRK) is the Nuclear localization signal element.

This sequence belongs to the plant homeotic and developmental regulators ALOG protein family.

Its subcellular location is the nucleus. In terms of biological role, probable transcription regulator that acts as a developmental regulator by promoting cell growth in response to light. This is Protein LIGHT-DEPENDENT SHORT HYPOCOTYLS 6 (LSH6) from Arabidopsis thaliana (Mouse-ear cress).